The primary structure comprises 276 residues: Sulfur carrier protein FdhD (276 aa).

The active-site Cysteine persulfide intermediate is the Cys-118.

The protein belongs to the FdhD family.

It is found in the cytoplasm. Its function is as follows. Required for formate dehydrogenase (FDH) activity. Acts as a sulfur carrier protein that transfers sulfur from IscS to the molybdenum cofactor prior to its insertion into FDH. The protein is Sulfur carrier protein FdhD of Mycobacterium bovis (strain ATCC BAA-935 / AF2122/97).